The sequence spans 161 residues: Phosphopantetheine adenylyltransferase (161 aa).

Threonine 9 is a binding site for substrate. ATP is bound by residues 9–10 and histidine 17; that span reads TF. Positions 41, 73, and 87 each coordinate substrate. ATP contacts are provided by residues 88–90, glutamate 98, and 123–129; these read GLR and YQFISGT.

Belongs to the bacterial CoaD family. Homohexamer. The cofactor is Mg(2+).

It is found in the cytoplasm. The catalysed reaction is (R)-4'-phosphopantetheine + ATP + H(+) = 3'-dephospho-CoA + diphosphate. It participates in cofactor biosynthesis; coenzyme A biosynthesis; CoA from (R)-pantothenate: step 4/5. In terms of biological role, reversibly transfers an adenylyl group from ATP to 4'-phosphopantetheine, yielding dephospho-CoA (dPCoA) and pyrophosphate. This chain is Phosphopantetheine adenylyltransferase, found in Janthinobacterium sp. (strain Marseille) (Minibacterium massiliensis).